The sequence spans 392 residues: Gastricsin (392 aa).

Positions 1 to 16 (MKWMVVALLCLPLLEA) are cleaved as a signal peptide. Residues 17 to 62 (ALIRVPLKKMKSIRETMKEQGVLKDFLKNHKYDPGQKYHFGKFGDY) constitute a propeptide, activation peptide. Residues 76-389 (YYGEISIGTP…DMGNNRVGLA (314 aa)) form the Peptidase A1 domain. Asp94 is a catalytic residue. Disulfide bonds link Cys107/Cys112 and Cys270/Cys275. Asp280 is an active-site residue. A disulfide bridge connects residues Cys314 and Cys347.

The protein belongs to the peptidase A1 family.

The protein localises to the secreted. It catalyses the reaction More restricted specificity than pepsin A, but shows preferential cleavage at Tyr-|-Xaa bonds. High activity on hemoglobin.. Functionally, hydrolyzes a variety of proteins. This Mus musculus (Mouse) protein is Gastricsin (Pgc).